Reading from the N-terminus, the 179-residue chain is MLEVLILAFALSMDAFAVSIGLGIKNKQNLKALALKAGLFFGIFQALMPFLGFLGGIGLREYIQGYDKIVAFILLLAIGGKMIYEAFNENVEEEISQITNKILLTLAIATSLDAMAAGYSLHLFNLNIYLSLFVIGFTTFIISYIGVYVGSRGGEKYESKAEILGGVVLILIGLKILLF.

The next 6 helical transmembrane spans lie at Val4–Ile24, Leu39–Leu59, Ile69–Glu89, Ile102–His122, Ile128–Tyr148, and Ser159–Phe179.

Belongs to the MntP (TC 9.B.29) family.

The protein resides in the cell inner membrane. Probably functions as a manganese efflux pump. In Aliarcobacter butzleri (strain RM4018) (Arcobacter butzleri), this protein is Putative manganese efflux pump MntP.